The following is a 437-amino-acid chain: Ribosomal protein uS12 methylthiotransferase RimO (437 aa).

In terms of domain architecture, MTTase N-terminal spans 4 to 114 (PRVSFVSLGC…VMAAVHEAAP (111 aa)). C13, C49, C78, C145, C149, and C152 together coordinate [4Fe-4S] cluster. One can recognise a Radical SAM core domain in the interval 131–369 (LTPRHYAYLK…MQRQQKISAT (239 aa)). The TRAM domain maps to 372-437 (AKKVGKRLPV…DAYDLYGSAV (66 aa)).

The protein belongs to the methylthiotransferase family. RimO subfamily. [4Fe-4S] cluster serves as cofactor.

The protein localises to the cytoplasm. It catalyses the reaction L-aspartate(89)-[ribosomal protein uS12]-hydrogen + (sulfur carrier)-SH + AH2 + 2 S-adenosyl-L-methionine = 3-methylsulfanyl-L-aspartate(89)-[ribosomal protein uS12]-hydrogen + (sulfur carrier)-H + 5'-deoxyadenosine + L-methionine + A + S-adenosyl-L-homocysteine + 2 H(+). In terms of biological role, catalyzes the methylthiolation of an aspartic acid residue of ribosomal protein uS12. The chain is Ribosomal protein uS12 methylthiotransferase RimO from Mesorhizobium japonicum (strain LMG 29417 / CECT 9101 / MAFF 303099) (Mesorhizobium loti (strain MAFF 303099)).